Reading from the N-terminus, the 335-residue chain is Beta-ketoacyl-[acyl-carrier-protein] synthase III (335 aa).

Residues Cys-120 and His-261 contribute to the active site. Positions 262-266 (QANER) are ACP-binding. Asn-291 is a catalytic residue.

Belongs to the thiolase-like superfamily. FabH family. In terms of assembly, homodimer.

Its subcellular location is the cytoplasm. It carries out the reaction malonyl-[ACP] + acetyl-CoA + H(+) = 3-oxobutanoyl-[ACP] + CO2 + CoA. It functions in the pathway lipid metabolism; fatty acid biosynthesis. Its function is as follows. Catalyzes the condensation reaction of fatty acid synthesis by the addition to an acyl acceptor of two carbons from malonyl-ACP. Catalyzes the first condensation reaction which initiates fatty acid synthesis and may therefore play a role in governing the total rate of fatty acid production. Possesses both acetoacetyl-ACP synthase and acetyl transacylase activities. Its substrate specificity determines the biosynthesis of branched-chain and/or straight-chain of fatty acids. The chain is Beta-ketoacyl-[acyl-carrier-protein] synthase III from Chlamydia pneumoniae (Chlamydophila pneumoniae).